We begin with the raw amino-acid sequence, 371 residues long: N-methyl-L-tryptophan oxidase (371 aa).

4-34 (DLIVIGSGSVGSAAGYYASQAGLNVLMIDSA) provides a ligand contact to FAD. The residue at position 307 (cysteine 307) is an S-8alpha-FAD cysteine.

The protein belongs to the MSOX/MTOX family. MTOX subfamily. In terms of assembly, monomer. Requires FAD as cofactor.

It carries out the reaction N(alpha)-methyl-L-tryptophan + O2 + H2O = L-tryptophan + formaldehyde + H2O2. Functionally, catalyzes the oxidative demethylation of N-methyl-L-tryptophan. This Yersinia pseudotuberculosis serotype O:1b (strain IP 31758) protein is N-methyl-L-tryptophan oxidase.